The following is a 620-amino-acid chain: 1-deoxy-D-xylulose-5-phosphate synthase (620 aa).

Thiamine diphosphate-binding positions include histidine 80 and glycine 121 to serine 123. Aspartate 152 serves as a coordination point for Mg(2+). Thiamine diphosphate contacts are provided by residues glycine 153 to alanine 154, asparagine 181, tyrosine 288, and glutamate 370. Asparagine 181 lines the Mg(2+) pocket.

It belongs to the transketolase family. DXPS subfamily. In terms of assembly, homodimer. It depends on Mg(2+) as a cofactor. Thiamine diphosphate serves as cofactor.

The enzyme catalyses D-glyceraldehyde 3-phosphate + pyruvate + H(+) = 1-deoxy-D-xylulose 5-phosphate + CO2. The protein operates within metabolic intermediate biosynthesis; 1-deoxy-D-xylulose 5-phosphate biosynthesis; 1-deoxy-D-xylulose 5-phosphate from D-glyceraldehyde 3-phosphate and pyruvate: step 1/1. Functionally, catalyzes the acyloin condensation reaction between C atoms 2 and 3 of pyruvate and glyceraldehyde 3-phosphate to yield 1-deoxy-D-xylulose-5-phosphate (DXP). The sequence is that of 1-deoxy-D-xylulose-5-phosphate synthase from Shigella sonnei (strain Ss046).